The primary structure comprises 757 residues: Catalase-peroxidase (757 aa).

Residues 1–28 (MENQSNDISKCPFHNGSMDNQAASGTKN) form a disordered region. Residues 17–28 (SMDNQAASGTKN) are compositionally biased toward polar residues. The segment at residues 100–247 (WHSAGTYRVH…LAAVQMGLIY (148 aa)) is a cross-link (tryptophyl-tyrosyl-methioninium (Trp-Tyr) (with M-273)). The Proton acceptor role is filled by His-101. The tryptophyl-tyrosyl-methioninium (Tyr-Met) (with W-100) cross-link spans 247–273 (YVNPEGPDGNPDPILAAKDIRDTFGRM). His-288 is a heme b binding site.

It belongs to the peroxidase family. Peroxidase/catalase subfamily. In terms of assembly, homodimer or homotetramer. Heme b serves as cofactor. In terms of processing, formation of the three residue Trp-Tyr-Met cross-link is important for the catalase, but not the peroxidase activity of the enzyme.

It carries out the reaction H2O2 + AH2 = A + 2 H2O. The catalysed reaction is 2 H2O2 = O2 + 2 H2O. Its function is as follows. Bifunctional enzyme with both catalase and broad-spectrum peroxidase activity. The polypeptide is Catalase-peroxidase (Flavobacterium johnsoniae (strain ATCC 17061 / DSM 2064 / JCM 8514 / BCRC 14874 / CCUG 350202 / NBRC 14942 / NCIMB 11054 / UW101) (Cytophaga johnsonae)).